Here is an 82-residue protein sequence, read N- to C-terminus: MPKRTLQGVVVSDKTAKTVVVRVDRRFTHPIYKKTIRRSKNYHAHDENNEFKPGDMVWIEESKPISKLKRWVVIRGEHKKSA.

Belongs to the universal ribosomal protein uS17 family. As to quaternary structure, part of the 30S ribosomal subunit.

Its function is as follows. One of the primary rRNA binding proteins, it binds specifically to the 5'-end of 16S ribosomal RNA. The sequence is that of Small ribosomal subunit protein uS17 from Bradyrhizobium diazoefficiens (strain JCM 10833 / BCRC 13528 / IAM 13628 / NBRC 14792 / USDA 110).